Here is a 352-residue protein sequence, read N- to C-terminus: UDP-N-acetylglucosamine--N-acetylmuramyl-(pentapeptide) pyrophosphoryl-undecaprenol N-acetylglucosamine transferase 2 (352 aa).

UDP-N-acetyl-alpha-D-glucosamine-binding positions include 11-13 (SAG), Arg164, Ser194, and Gln289.

It belongs to the glycosyltransferase 28 family. MurG subfamily.

Its subcellular location is the cell membrane. The enzyme catalyses di-trans,octa-cis-undecaprenyl diphospho-N-acetyl-alpha-D-muramoyl-L-alanyl-D-glutamyl-meso-2,6-diaminopimeloyl-D-alanyl-D-alanine + UDP-N-acetyl-alpha-D-glucosamine = di-trans,octa-cis-undecaprenyl diphospho-[N-acetyl-alpha-D-glucosaminyl-(1-&gt;4)]-N-acetyl-alpha-D-muramoyl-L-alanyl-D-glutamyl-meso-2,6-diaminopimeloyl-D-alanyl-D-alanine + UDP + H(+). Its pathway is cell wall biogenesis; peptidoglycan biosynthesis. In terms of biological role, cell wall formation. Catalyzes the transfer of a GlcNAc subunit on undecaprenyl-pyrophosphoryl-MurNAc-pentapeptide (lipid intermediate I) to form undecaprenyl-pyrophosphoryl-MurNAc-(pentapeptide)GlcNAc (lipid intermediate II). In Bacillus cereus (strain ATCC 14579 / DSM 31 / CCUG 7414 / JCM 2152 / NBRC 15305 / NCIMB 9373 / NCTC 2599 / NRRL B-3711), this protein is UDP-N-acetylglucosamine--N-acetylmuramyl-(pentapeptide) pyrophosphoryl-undecaprenol N-acetylglucosamine transferase 2.